The primary structure comprises 366 residues: Phospho-N-acetylmuramoyl-pentapeptide-transferase (366 aa).

Helical transmembrane passes span 27-47 (AALFTSALIVFLFGPAMIASL), 71-91 (TPTMGGLMILTGIVVSSLLWA), 93-113 (LSSIYVVSTLLVTLGFGAIGF), 138-158 (FVIAAVAVFFMMQAALSAGAA), 174-194 (LMLNLGYFFVLFGGFVIVGAG), 205-225 (GLAIVPVMIASAAFGLIAYLA), 245-265 (LAVILGAVIGAGLGFLWFNAP), 268-288 (AIFMGDTGSLALGGLIGTVAV), 297-317 (IIIGGLFVIETLSVIIQVFWF), and 343-363 (QVVIRFWIIAVILAMVGLSTL).

The protein belongs to the glycosyltransferase 4 family. MraY subfamily. Mg(2+) serves as cofactor.

The protein resides in the cell inner membrane. It catalyses the reaction UDP-N-acetyl-alpha-D-muramoyl-L-alanyl-gamma-D-glutamyl-meso-2,6-diaminopimeloyl-D-alanyl-D-alanine + di-trans,octa-cis-undecaprenyl phosphate = di-trans,octa-cis-undecaprenyl diphospho-N-acetyl-alpha-D-muramoyl-L-alanyl-D-glutamyl-meso-2,6-diaminopimeloyl-D-alanyl-D-alanine + UMP. Its pathway is cell wall biogenesis; peptidoglycan biosynthesis. In terms of biological role, catalyzes the initial step of the lipid cycle reactions in the biosynthesis of the cell wall peptidoglycan: transfers peptidoglycan precursor phospho-MurNAc-pentapeptide from UDP-MurNAc-pentapeptide onto the lipid carrier undecaprenyl phosphate, yielding undecaprenyl-pyrophosphoryl-MurNAc-pentapeptide, known as lipid I. The polypeptide is Phospho-N-acetylmuramoyl-pentapeptide-transferase (Rhizobium meliloti (strain 1021) (Ensifer meliloti)).